The chain runs to 150 residues: Peptide deformylase (150 aa).

Positions 88 and 130 each coordinate Fe cation. The active site involves E131. H134 is a binding site for Fe cation.

It belongs to the polypeptide deformylase family. The cofactor is Fe(2+).

The enzyme catalyses N-terminal N-formyl-L-methionyl-[peptide] + H2O = N-terminal L-methionyl-[peptide] + formate. Removes the formyl group from the N-terminal Met of newly synthesized proteins. Requires at least a dipeptide for an efficient rate of reaction. N-terminal L-methionine is a prerequisite for activity but the enzyme has broad specificity at other positions. The chain is Peptide deformylase from Desulfitobacterium hafniense (strain Y51).